The primary structure comprises 500 residues: Transcription termination factor MTERF8, chloroplastic (500 aa).

The N-terminal 64 residues, 1-64 (MVILSLVSCS…NHREPALTFR (64 aa)), are a transit peptide targeting the chloroplast.

Belongs to the mTERF family.

The protein localises to the plastid. The protein resides in the chloroplast. Functionally, transcription termination factor that is transcriptionally active in chloroplasts. This is Transcription termination factor MTERF8, chloroplastic from Arabidopsis thaliana (Mouse-ear cress).